The chain runs to 388 residues: MTIMSDLPRDLLAEILSRVPLTSLRAVRLTCKKWNDLSKDRSFLKKQIVETKKKQLESKEIEVIMMRNFRVYLTSIDIHNNVDPSFTPKGTLISLSDDANHHQVDNVSRVFHCDGLLLCITKDLHYRLVVWNPYFGQTRWIQPRNSYHRKDNYALGYDEKKNHKILRLKDNYYAPRERICEFELYSFESNSWKVVLDVSPDWYIPSYNRGLSLKGNTYWYATEKHVNVDFLICFDFTTEKFGPRLPLPFNATESPTYEDVVTLSSVGEEQLAVLFQSEYTLMMEIWVTSKVESTEVLWNKLFLEVDLIAISSHFQFLAEAGSFFIDQKKNVVVVFDKDMDEATDRDMAYVVGKNGYFKKVDIGEEAYTSCFPLVCSYVPSSEQIRQLT.

Residues 1 to 47 (MTIMSDLPRDLLAEILSRVPLTSLRAVRLTCKKWNDLSKDRSFLKKQ) form the F-box domain.

This chain is F-box protein At5g42460, found in Arabidopsis thaliana (Mouse-ear cress).